The following is a 345-amino-acid chain: Ephrin-B1 (345 aa).

The first 24 residues, methionine 1 to leucine 24, serve as a signal peptide directing secretion. Residues alanine 25–lysine 236 lie on the Extracellular side of the membrane. The Ephrin RBD domain occupies lysine 30 to valine 164. Cystine bridges form between cysteine 64/cysteine 101 and cysteine 89/cysteine 153. N-linked (GlcNAc...) asparagine glycosylation is present at asparagine 139. The tract at residues asparagine 169–glycine 227 is disordered. The segment covering serine 204–serine 217 has biased composition (basic and acidic residues). The chain crosses the membrane as a helical span at residues valine 237–leucine 257. Residues threonine 258–valine 345 are Cytoplasmic-facing. Positions valine 259–threonine 272 match the Nuclear localization signal motif. An interaction with ZHX2 region spans residues leucine 262–threonine 293. A phosphoserine mark is found at serine 280 and serine 286. Positions tyrosine 343–valine 345 match the PDZ-binding motif.

This sequence belongs to the ephrin family. Interacts (via PDZ-binding motif) with GRIP1 and GRIP2 (via PDZ domain 6). Interacts with TLE1. The intracellular domain peptide interacts with ZHX2; the interaction enhances ZHX2 transcriptional repression activity. In terms of processing, inducible phosphorylation of tyrosine residues in the cytoplasmic domain. Proteolytically processed. The ectodomain is cleaved, probably by a metalloprotease, to produce a membrane-tethered C-terminal fragment. This fragment is then further processed by the gamma-secretase complex to yield a soluble intracellular domain peptide which can translocate to the nucleus. The intracellular domain peptide is highly labile suggesting that it is targeted for degradation by the proteasome. In terms of tissue distribution, expressed on lateral floor plate cells, specifically on commissural axon segments that have passed through the floor plate. Expressed in cells of the retinal ganglion cell layer during retinal axon guidance to the optic disk. Expressed in myogenic progenitor cells.

Its subcellular location is the cell membrane. It is found in the membrane raft. The protein resides in the nucleus. Its function is as follows. Cell surface transmembrane ligand for Eph receptors, a family of receptor tyrosine kinases which are crucial for migration, repulsion and adhesion during neuronal, vascular and epithelial development. Binding to Eph receptors residing on adjacent cells leads to contact-dependent bidirectional signaling into neighboring cells. Shows high affinity for the receptor tyrosine kinase EPHB1/ELK. Can also bind EPHB2 and EPHB3. Binds to, and induces the collapse of, commissural axons/growth cones in vitro. May play a role in constraining the orientation of longitudinally projecting axons. The chain is Ephrin-B1 (Efnb1) from Mus musculus (Mouse).